Reading from the N-terminus, the 296-residue chain is Enoyl-CoA hydratase AKT3-2 (296 aa).

Residues Pro294 to Leu296 carry the Peroxisomal targeting signal type 1 motif.

Belongs to the enoyl-CoA hydratase/isomerase family.

Its subcellular location is the peroxisome. It catalyses the reaction a (3S)-3-hydroxyacyl-CoA = a (2E)-enoyl-CoA + H2O. The catalysed reaction is a 4-saturated-(3S)-3-hydroxyacyl-CoA = a (3E)-enoyl-CoA + H2O. Its pathway is mycotoxin biosynthesis. Enoyl-CoA hydratase; part of the gene clusters that mediate the biosynthesis of the host-selective toxins (HSTs) AK-toxins responsible for Japanese pear black spot disease by the Japanese pear pathotype. AK-toxins are esters of 9,10-epoxy 8-hydroxy 9-methyldecatrienoic acid (EDA). On cellular level, AK-toxins affect plasma membrane of susceptible cells and cause a sudden increase in loss of K(+) after a few minutes of toxin treatment. The acyl-CoA ligase AKT1, the hydrolase AKT2 and enoyl-CoA hydratase AKT3 are all involved in the biosynthesis of the AK-, AF- and ACT-toxin common 9,10-epoxy-8-hydroxy-9-methyl-decatrienoic acid (EDA) structural moiety. Part of the EDA biosynthesis occurs in the peroxisome since these 3 enzymes are localized in peroxisomes. The exact roles of the 3 enzymes, as well as of additional AK-toxin clusters enzymes, including AKT4, AKT6 and AKTS1, have still to be elucidated. The Cytochrome P450 monooxygenase AKT7 on the other side functions to limit production of EDA and AK-toxin, probably via the catalysis of a side reaction of EDA or its precursor. The chain is Enoyl-CoA hydratase AKT3-2 from Alternaria alternata (Alternaria rot fungus).